Here is a 587-residue protein sequence, read N- to C-terminus: Serine/threonine-protein phosphatase 2A 65 kDa regulatory subunit A gamma isoform (587 aa).

Serine 2 carries the N-acetylserine modification. HEAT repeat units follow at residues 2–42, 44–80, 81–119, 158–194, 197–235, 236–274, 276–313, 314–352, 353–391, 393–430, 432–469, 470–508, 509–547, and 549–586; these read SMVD…ALGE, RTRK…YVGG, VEYA…QMRE, DVLK…AATI, AHLK…LLEP, QDCV…AVGP, PTRT…ILNP, ELAI…VLGK, DATI…VIGI, LLSQ…QLGV, FFDE…EFGP, EWAM…VMGS, EITC…IVDQ, and VVEN…VMMS.

It belongs to the phosphatase 2A regulatory subunit A family. In terms of assembly, PP2A consists of a common heterodimeric core enzyme, composed of a 36 kDa catalytic subunit (subunit C) and a 65 kDa constant regulatory subunit (subunit A), that associates with a variety of regulatory subunits such as subunits B (the R2/B/PR55/B55, R3/B''/PR72/PR130/PR59 and R5/B'/B56 families). Interacts with CHIP. Interacts with SRK2E/OST1. Post-translationally, ubiquitinated. CHIP-mediated ubiquitination enhances phosphatase activity after an abiotic stress such as low temperature or darkness. Expressed ubiquitously at stable levels. However, higher protein levels in roots and flowers (at protein level).

Its subcellular location is the cytoplasm. The protein localises to the cytosol. It is found in the nucleus. In terms of biological role, the A subunit of protein phosphatase 2A serves as a scaffolding molecule to coordinate the assembly of the catalytic subunit and a variable regulatory B subunit. Involved during developmental process such as seedling and floral developments. Seems to act as a negative regulator of PP2A catalytic activity. This is Serine/threonine-protein phosphatase 2A 65 kDa regulatory subunit A gamma isoform (PP2AA3) from Arabidopsis thaliana (Mouse-ear cress).